Here is a 177-residue protein sequence, read N- to C-terminus: UPF0200 protein STK_09500 (177 aa).

11–18 lines the ATP pocket; sequence GMPGSGKG.

The protein belongs to the UPF0200 family.

In Sulfurisphaera tokodaii (strain DSM 16993 / JCM 10545 / NBRC 100140 / 7) (Sulfolobus tokodaii), this protein is UPF0200 protein STK_09500.